A 269-amino-acid chain; its full sequence is Glutamate racemase (269 aa).

Residues 14 to 15 and 46 to 47 contribute to the substrate site; these read DS and YS. The active-site Proton donor/acceptor is the C78. A substrate-binding site is contributed by 79–80; sequence NT. C189 serves as the catalytic Proton donor/acceptor. 190–191 contributes to the substrate binding site; it reads TH.

The protein belongs to the aspartate/glutamate racemases family.

The catalysed reaction is L-glutamate = D-glutamate. The protein operates within cell wall biogenesis; peptidoglycan biosynthesis. Provides the (R)-glutamate required for cell wall biosynthesis. This is Glutamate racemase from Haemophilus influenzae (strain PittGG).